We begin with the raw amino-acid sequence, 438 residues long: Terminase, large subunit (438 aa).

The short motif at 62 to 68 is the Walker A motif element; it reads SRRVGKS. The Walker B motif motif lies at 150-155; that stretch reads FIIFDE. The active-site For ATPase activity is the glutamate 155. 3 residues coordinate Mg(2+): aspartate 286, aspartate 342, and aspartate 418.

The protein belongs to the Tequatrovirus large terminase family. As to quaternary structure, interacts with the terminase small subunit; the active complex is probably heterooligomeric. Interacts with the portal protein. Mg(2+) is required as a cofactor.

Its function is as follows. The terminase large subunit acts as an ATP driven molecular motor necessary for viral DNA translocation into empty capsids and as an endonuclease that cuts the viral genome to initiate and to end a packaging reaction The terminase lies at a unique vertex of the procapsid and is composed of two subunits, a small terminase subunit involved in viral DNA recognition (packaging sequence), and a large terminase subunit possessing endonucleolytic and ATPase activities. Both terminase subunits heterooligomerize and are docked on the portal protein to form the packaging machine. The terminase large subunit exhibits endonuclease activity and cleaves the viral genome concatemer. Direct long terminal repeats at each end of the genome are duplicated in concert with packaging. Once the capsid is packaged with the DNA, the terminase complex is substituted by the tail. This chain is Terminase, large subunit, found in Escherichia phage T5 (Enterobacteria phage T5).